A 355-amino-acid chain; its full sequence is MSTERRASSNPMTNEENAMFLDILHEAPLFGHRKSRSLVGSYLYMLLLAGYAILAAGAPWMFHRVQQLTPSLLCCCDVALLVVTGVFQQYFVYQVQKIRLQGYYSFSQKLKHVVRLPFAIAAYGTAAMLLVIVWRPQIHILSISSLQRIIMLVEAVGAGFFMGLYIGYVHQYNSVNSRPDVLKSLYSPLQPSSSMEGLRYYEGRLSDQQTALLQYQRENLHFLSEEILCLQEKLSKYEQSDDGSTPQVDLAHLLAARDQELRTLSAEMNQLQSELRLARSLIAERDAEVQRVNSTNNQYIEENERLRAILSEWSMRAANLERALEVERMSNSELQKEVASTRRKQMLETTTSEQP.

The next 4 membrane-spanning stretches (helical) occupy residues 42–62 (YLYM…PWMF), 72–92 (LLCC…QYFV), 113–133 (VVRL…LVIV), and 149–169 (IIML…IGYV). The stretch at 220 to 337 (LHFLSEEILC…RMSNSELQKE (118 aa)) forms a coiled coil. Residues 331–340 (NSELQKEVAS) are compositionally biased toward basic and acidic residues. The disordered stretch occupies residues 331-355 (NSELQKEVASTRRKQMLETTTSEQP).

Belongs to the TMEM192 family. Interacts with FRI.

The protein resides in the membrane. This Arabidopsis thaliana (Mouse-ear cress) protein is Protein FIP1.